The chain runs to 39 residues: Photosystem II reaction center protein L (39 aa).

A helical transmembrane segment spans residues 18–38 (SLYLGLLSVFVLGILFSSYFF).

It belongs to the PsbL family. PSII is composed of 1 copy each of membrane proteins PsbA, PsbB, PsbC, PsbD, PsbE, PsbF, PsbH, PsbI, PsbJ, PsbK, PsbL, PsbM, PsbT, PsbX, PsbY, Psb30/Ycf12, peripheral proteins PsbO, CyanoQ (PsbQ), PsbU, PsbV and a large number of cofactors. It forms dimeric complexes.

The protein resides in the cellular thylakoid membrane. Its function is as follows. One of the components of the core complex of photosystem II (PSII). PSII is a light-driven water:plastoquinone oxidoreductase that uses light energy to abstract electrons from H(2)O, generating O(2) and a proton gradient subsequently used for ATP formation. It consists of a core antenna complex that captures photons, and an electron transfer chain that converts photonic excitation into a charge separation. This subunit is found at the monomer-monomer interface and is required for correct PSII assembly and/or dimerization. The chain is Photosystem II reaction center protein L from Prochlorococcus marinus (strain MIT 9301).